Here is a 560-residue protein sequence, read N- to C-terminus: Serine palmitoyltransferase 2 (560 aa).

The chain crosses the membrane as a helical span at residues 65–85 (PMLVAVLTYVGYGVLTLFGYL). Position 377 is an N6-(pyridoxal phosphate)lysine (lysine 377).

This sequence belongs to the class-II pyridoxal-phosphate-dependent aminotransferase family. In terms of assembly, component of the serine palmitoyltransferase (SPT) complex, which is composed of SPTLC1, SPTLC2 or SPTLC3 and SPTSSA or SPTSSB. The heterodimer consisting of SPTLC1 and SPTLC2/SPTLC3 forms the catalytic core of the enzyme, while SPTSSA or SPTSSB subunits determine substrate specificity. SPT also interacts with ORMDL proteins, especially ORMDL3, which negatively regulate SPT activity in the presence of ceramides. Forms dimers of heterodimers with SPTLC1. The cofactor is pyridoxal 5'-phosphate.

The protein resides in the endoplasmic reticulum membrane. It carries out the reaction L-serine + hexadecanoyl-CoA + H(+) = 3-oxosphinganine + CO2 + CoA. The catalysed reaction is octadecanoyl-CoA + L-serine + H(+) = 3-oxoeicosasphinganine + CO2 + CoA. The protein operates within lipid metabolism; sphingolipid metabolism. Its activity is regulated as follows. SPT complex catalytic activity is negatively regulated by ORMDL proteins, including ORMDL3, in the presence of ceramides. This mechanism allows to maintain ceramide levels at sufficient concentrations for the production of complex sphingolipids, but which prevents the accumulation of ceramides to levels that trigger apoptosis. Its function is as follows. Component of the serine palmitoyltransferase multisubunit enzyme (SPT) that catalyzes the initial and rate-limiting step in sphingolipid biosynthesis by condensing L-serine and activated acyl-CoA (most commonly palmitoyl-CoA) to form long-chain bases. The SPT complex is composed of SPTLC1, SPTLC2 or SPTLC3 and SPTSSA or SPTSSB. Within this complex, the heterodimer consisting of SPTLC1 and SPTLC2/SPTLC3 forms the catalytic core. The composition of the serine palmitoyltransferase (SPT) complex determines the substrate preference. The SPTLC1-SPTLC2-SPTSSA complex shows a strong preference for C16-CoA substrate, while the SPTLC1-SPTLC3-SPTSSA isozyme uses both C14-CoA and C16-CoA as substrates, with a slight preference for C14-CoA. The SPTLC1-SPTLC2-SPTSSB complex shows a strong preference for C18-CoA substrate, while the SPTLC1-SPTLC3-SPTSSB isozyme displays an ability to use a broader range of acyl-CoAs, without apparent preference. Crucial for adipogenesis. The sequence is that of Serine palmitoyltransferase 2 (SPTLC2) from Cricetulus griseus (Chinese hamster).